An 858-amino-acid chain; its full sequence is MLQTKDLIWTLFFLGTAVSLQVDIVPSQGEISVGESKFFLCQVAGDAKDKDISWFSPNGEKLTPNQQRISVVWNDDSSSTLTIYNANIDDAGIYKCVVTGEDGSESEATVNVKIFQKLMFKNAPTPQEFREGEDAVIVCDVVSSLPPTIIWKHKGRDVILKKDVRFIVLSNNYLQIRGIKKTDEGTYRCEGRILARGEINFKDIQVIVNVPPTIQARQNIVNATANLGQSVTLVCDAEGFPEPTMSWTKDGEQIEQEEDDEKYIFSDDSSQLTIKKVDKNDEAEYICIAENKAGEQDATIHLKVFAKPKITYVENQTAMELEEQVTLTCEASGDPIPSITWRTSTRNISSEEKASWTRPEKQETLDGHMVVRSHARVSSLTLKSIQYTDAGEYICTASNTIGQDSQSMYLEVQYAPKLQGPVAVYTWEGNQVNITCEVFAYPSATISWFRDGQLLPSSNYSNIKIYNTPSASYLEVTPDSENDFGNYNCTAVNRIGQESLEFILVQADTPSSPSIDQVEPYSSTAQVQFDEPEATGGVPILKYKAEWRAVGEEVWHSKWYDAKEASMEGIVTIVGLKPETTYAVRLAALNGKGLGEISAASEFKTQPVQGEPSAPKLEGQMGEDGNSIKVNLIKQDDGGSPIRHYLVRYRALSSEWKPEIRLPSGSDHVMLKSLDWNAEYEVYVVAENQQGKSKAAHFVFRTSAQPTAIPANGSPTSGLSTGAIVGILIVIFVLLLVVVDITCYFLNKCGLFMCIAVNLCGKAGPGAKGKDMEEGKAAFSKDESKEPIVEVRTEEERTPNHDGGKHTEPNETTPLTEPEKGPVEAKPECQETETKPAPAEVKTVPNDATQTKENESKA.

The N-terminal stretch at 1–19 (MLQTKDLIWTLFFLGTAVS) is a signal peptide. 5 Ig-like C2-type domains span residues 20–111 (LQVD…ATVN), 116–205 (QKLM…KDIQ), 212–301 (PTIQ…ATIH), 308–413 (PKIT…LEVQ), and 416–501 (PKLQ…ESLE). Residues 20–718 (LQVDIVPSQG…IPANGSPTSG (699 aa)) lie on the Extracellular side of the membrane. 2 disulfides stabilise this stretch: Cys41-Cys96 and Cys139-Cys189. N-linked (GlcNAc...) asparagine glycosylation occurs at Asn222. Cys235 and Cys287 form a disulfide bridge. N-linked (GlcNAc...) asparagine glycans are attached at residues Asn315, Asn347, Asn433, Asn459, and Asn488. The cysteines at positions 329 and 395 are disulfide-linked. A disulfide bridge connects residues Cys436 and Cys489. 2 consecutive Fibronectin type-III domains span residues 509–608 (TPSS…TQPV) and 611–706 (EPSA…SAQP). Pro706 is lipidated: GPI-anchor amidated asparagine. Residues 719-739 (LSTGAIVGILIVIFVLLLVVV) form a helical membrane-spanning segment. The Cytoplasmic portion of the chain corresponds to 740–858 (DITCYFLNKC…TQTKENESKA (119 aa)). A lipid anchor (GPI-anchor amidated asparagine) is attached at Ile741. The interval 766–858 (GAKGKDMEEG…TQTKENESKA (93 aa)) is disordered. 2 stretches are compositionally biased toward basic and acidic residues: residues 768 to 809 (KGKD…HTEP) and 817 to 834 (EPEK…ETET). Phosphoserine occurs at positions 780 and 784.

In terms of assembly, (Microbial infection) Interacts with rabies virus glycoprotein. (Microbial infection) Interacts with Zika virus envelope protein E. As to quaternary structure, interacts with MDK. Found in a complex with SLC39A6, SLC39A10 and with NCAM1; this complex controls NCAM1 phosphorylation and integration into focal adhesion complexes during epithelial-tomesenchymal transition. Interacts with synaptic plasticity regulator PANTS. Polysialylated at Asn-459 and Asn-488 by ST8SIA2 and ST8SIA4. Polysialylation modulates cell interactions by confering both attractive and repulsive properties that are highly regulated by ST8SIA2 and ST8SIA4. Polysialylation is formed on a-2,3-linked sialic acid of core glycans.

It is found in the cell membrane. It localises to the secreted. Functionally, this protein is a cell adhesion molecule involved in neuron-neuron adhesion, neurite fasciculation, outgrowth of neurites, etc. In terms of biological role, (Microbial infection) Acts as a receptor for rabies virus. Its function is as follows. (Microbial infection) Acts as a receptor for Zika virus. In Homo sapiens (Human), this protein is Neural cell adhesion molecule 1.